The sequence spans 632 residues: MDPLKPPREEFEKFVAEVAYAIGIGEVPEIERSKRFGYFSAKFHKYRVDAGKLKETVDSLKSRQFKYLTSISVDGLYLNVDLAVEKVAELTFRAVAEMGDKYGFTDECKIGSFLVEHTSANPIHPLHIGHGRNAILGDSLVRLLRFCGNVVQSHFYVDDCGVQVMYAAIGYNVVKKYVDEVLKRTKPDVVIGAIYSAVNAIAEINRLKKELEKEKDDEKRREIINEIDSWVSVLKRLIDTEGEVINKLVEVLGQRNIVEEAAELNKRYETGDPEVKKIVREVVELVLKGQRETLARLGIELDSWDYESDIAVWSGEATRVVSELRRRWPQYIDDRGGAVVFRADKFVEDFKLWDVLDLPKFIPPVTLTRSDGTTLYVTRDVAYALWQARRGFDKVIRVISTEQTHEQAHVRIILYALGYEDVAKKLIHYAYEMVNLPGMKMSARRGQYISLDEILDEAVERSADLVKEKNPEIAGIIAERVGVGSVRYAFLSTSPRKPIEFKWETVLNMRQNSGPFLQYTYVRAYSILEKAQEIDLKKVAIPKEILPEERELILKVAEWPSVVREATRALRPDYVAEFLDGLALIFNSYYEKAPVLKTEEPVRSFRLALVNSVKTVLAAGFYILGIPTLTKM.

The 'HIGH' region motif lies at 120 to 130 (ANPIHPLHIGH).

Belongs to the class-I aminoacyl-tRNA synthetase family.

The protein localises to the cytoplasm. It catalyses the reaction tRNA(Arg) + L-arginine + ATP = L-arginyl-tRNA(Arg) + AMP + diphosphate. The polypeptide is Arginine--tRNA ligase (Pyrobaculum islandicum (strain DSM 4184 / JCM 9189 / GEO3)).